A 488-amino-acid polypeptide reads, in one-letter code: MKFKDLRDFVQQLEQRGELKRIQMPISPVLEMTEICDRTLRAKGPALLFEKPVGFDIPVLGNLFGTPERVAMGMGAEAVSELREIGKLLAFLKEPEPPKGLKDAWSKLPIFRKVIAMAPKVVKDAPCQEVVIEGDDVDLGMLPVQTCWPGDVAPLITWGLTVTKGPNKERQNLGIYRQQVIGRNKIIMRWLSHRGGALDFRDWCVKHPGEPYPVAVALGADPATILGAVTPVPDSLSEYAFAGLLRGSRTELIKCRGSNLQVPASAEIVLEGVIHPGEMADEGPYGDHTGYYNEVDSFPVLTVERITHRIKPIYHSTYTGRPPDEPAILGVALNEVFVPILQKQFPEIVDFYLPPEGCSYRMAVVTIKKQYPGHAKRVMLGVWSFLRQFMYTKFVIVTDDDINARDWNDVIWAITTRMDPKRDTVMIDNTPIDYLDFASPVSGLGSKMGLDATNKWPGETSREWGRAIVKDEATTRRVDEIWTQLGID.

Position 172 (N172) interacts with Mn(2+). Prenylated FMN contacts are provided by residues 175–177 (IYR), 189–191 (RWL), and 194–195 (RG). E238 contributes to the Mn(2+) binding site. The active-site Proton donor is the D287.

It belongs to the UbiD family. Homohexamer. It depends on prenylated FMN as a cofactor. Requires Mn(2+) as cofactor.

It is found in the cell membrane. The enzyme catalyses a 4-hydroxy-3-(all-trans-polyprenyl)benzoate + H(+) = a 2-(all-trans-polyprenyl)phenol + CO2. It functions in the pathway cofactor biosynthesis; ubiquinone biosynthesis. Its function is as follows. Catalyzes the decarboxylation of 3-octaprenyl-4-hydroxy benzoate to 2-octaprenylphenol, an intermediate step in ubiquinone biosynthesis. The chain is 3-octaprenyl-4-hydroxybenzoate carboxy-lyase from Pseudomonas syringae pv. syringae (strain B728a).